Reading from the N-terminus, the 156-residue chain is Cytochrome c-type biogenesis protein CcmE (156 aa).

The Cytoplasmic portion of the chain corresponds to 1–7; that stretch reads MTRRQRR. A helical; Signal-anchor for type II membrane protein transmembrane segment spans residues 8 to 28; the sequence is LGILLAALVCAGAATALTLNA. The Periplasmic portion of the chain corresponds to 29 to 156; sequence FRSNLVFFFS…AKESARSASR (128 aa). Positions 123 and 127 each coordinate heme.

The protein belongs to the CcmE/CycJ family.

It localises to the cell inner membrane. Functionally, heme chaperone required for the biogenesis of c-type cytochromes. Transiently binds heme delivered by CcmC and transfers the heme to apo-cytochromes in a process facilitated by CcmF and CcmH. This is Cytochrome c-type biogenesis protein CcmE from Ralstonia pickettii (strain 12J).